A 143-amino-acid polypeptide reads, in one-letter code: Large ribosomal subunit protein uL11 (143 aa).

This sequence belongs to the universal ribosomal protein uL11 family. In terms of assembly, part of the ribosomal stalk of the 50S ribosomal subunit. Interacts with L10 and the large rRNA to form the base of the stalk. L10 forms an elongated spine to which L12 dimers bind in a sequential fashion forming a multimeric L10(L12)X complex. One or more lysine residues are methylated.

Its function is as follows. Forms part of the ribosomal stalk which helps the ribosome interact with GTP-bound translation factors. The sequence is that of Large ribosomal subunit protein uL11 from Bordetella pertussis (strain Tohama I / ATCC BAA-589 / NCTC 13251).